The sequence spans 357 residues: Cyclin-Y (357 aa).

Residues 1-13 show a composition bias toward polar residues; it reads MGNSSCCLRTRSS. The interval 1–23 is disordered; sequence MGNSSCCLRTRSSSGEDKSYNND. The Cyclin N-terminal domain maps to 186–284; it reads PDHRNIYRFV…RFLECLDFNI (99 aa).

This sequence belongs to the cyclin family. In terms of assembly, interacts with pct-1; the interaction is required to activate pct-1.

Its subcellular location is the cytoplasm. It is found in the cell projection. It localises to the dendrite. The protein localises to the axon. Its function is as follows. In association with pct-1, regulates the trafficking of synaptic vesicle precursors in DA motor neurons by promoting anterograde trafficking to the axon and preventing dynein-dependent trafficking to the dendrite. May also regulate synaptic vesicle trafficking in DD motor neurons and in RIA interneurons. Involved in synapse formation during DD motor neuron remodeling by disassembling ventral presynaptic structures. May activate cdk-5. This chain is Cyclin-Y, found in Caenorhabditis elegans.